Here is a 215-residue protein sequence, read N- to C-terminus: Cytochrome b6 (215 aa).

A helical transmembrane segment spans residues 32–52 (IFYCIGGITFTCFLVQVATGF). C35 contributes to the heme c binding site. 2 residues coordinate heme b: H86 and H100. A run of 3 helical transmembrane segments spans residues 90-110 (ASMM…TGGF), 116-136 (LTWV…VTGY), and 186-206 (LHTF…FLMI). Residues H187 and H202 each coordinate heme b.

It belongs to the cytochrome b family. PetB subfamily. The 4 large subunits of the cytochrome b6-f complex are cytochrome b6, subunit IV (17 kDa polypeptide, PetD), cytochrome f and the Rieske protein, while the 4 small subunits are PetG, PetL, PetM and PetN. The complex functions as a dimer. Requires heme b as cofactor. The cofactor is heme c.

The protein localises to the plastid. Its subcellular location is the chloroplast thylakoid membrane. Component of the cytochrome b6-f complex, which mediates electron transfer between photosystem II (PSII) and photosystem I (PSI), cyclic electron flow around PSI, and state transitions. The protein is Cytochrome b6 of Chlorella vulgaris (Green alga).